The primary structure comprises 163 residues: NADH-quinone oxidoreductase subunit I (163 aa).

2 4Fe-4S ferredoxin-type domains span residues 53–83 (LRRY…IEAG) and 94–123 (VRYD…EGPN). C63, C66, C69, C73, C103, C106, C109, and C113 together coordinate [4Fe-4S] cluster.

This sequence belongs to the complex I 23 kDa subunit family. As to quaternary structure, NDH-1 is composed of 14 different subunits. Subunits NuoA, H, J, K, L, M, N constitute the membrane sector of the complex. [4Fe-4S] cluster is required as a cofactor.

The protein resides in the cell inner membrane. The enzyme catalyses a quinone + NADH + 5 H(+)(in) = a quinol + NAD(+) + 4 H(+)(out). Its function is as follows. NDH-1 shuttles electrons from NADH, via FMN and iron-sulfur (Fe-S) centers, to quinones in the respiratory chain. The immediate electron acceptor for the enzyme in this species is believed to be ubiquinone. Couples the redox reaction to proton translocation (for every two electrons transferred, four hydrogen ions are translocated across the cytoplasmic membrane), and thus conserves the redox energy in a proton gradient. The sequence is that of NADH-quinone oxidoreductase subunit I from Bartonella tribocorum (strain CIP 105476 / IBS 506).